Consider the following 189-residue polypeptide: Protein GrpE (189 aa).

Residues 1–13 (MSENKQPEQNQDL) show a composition bias toward polar residues. Positions 1-35 (MSENKQPEQNQDLTGEPSPEELEAAQAADEFDAMN) are disordered.

It belongs to the GrpE family. In terms of assembly, homodimer.

Its subcellular location is the cytoplasm. Its function is as follows. Participates actively in the response to hyperosmotic and heat shock by preventing the aggregation of stress-denatured proteins, in association with DnaK and GrpE. It is the nucleotide exchange factor for DnaK and may function as a thermosensor. Unfolded proteins bind initially to DnaJ; upon interaction with the DnaJ-bound protein, DnaK hydrolyzes its bound ATP, resulting in the formation of a stable complex. GrpE releases ADP from DnaK; ATP binding to DnaK triggers the release of the substrate protein, thus completing the reaction cycle. Several rounds of ATP-dependent interactions between DnaJ, DnaK and GrpE are required for fully efficient folding. The polypeptide is Protein GrpE (Polaromonas naphthalenivorans (strain CJ2)).